The primary structure comprises 120 residues: NAD(P)H-quinone oxidoreductase subunit 3, chloroplastic (120 aa).

A run of 3 helical transmembrane segments spans residues 14 to 34 (LIIS…LAPI), 64 to 84 (MFAL…PWAM), and 88 to 108 (VLGV…IVGS).

Belongs to the complex I subunit 3 family. As to quaternary structure, NDH is composed of at least 16 different subunits, 5 of which are encoded in the nucleus.

The protein localises to the plastid. The protein resides in the chloroplast thylakoid membrane. It carries out the reaction a plastoquinone + NADH + (n+1) H(+)(in) = a plastoquinol + NAD(+) + n H(+)(out). It catalyses the reaction a plastoquinone + NADPH + (n+1) H(+)(in) = a plastoquinol + NADP(+) + n H(+)(out). NDH shuttles electrons from NAD(P)H:plastoquinone, via FMN and iron-sulfur (Fe-S) centers, to quinones in the photosynthetic chain and possibly in a chloroplast respiratory chain. The immediate electron acceptor for the enzyme in this species is believed to be plastoquinone. Couples the redox reaction to proton translocation, and thus conserves the redox energy in a proton gradient. This is NAD(P)H-quinone oxidoreductase subunit 3, chloroplastic from Cicer arietinum (Chickpea).